A 1686-amino-acid polypeptide reads, in one-letter code: Gag-Pol polyprotein (1686 aa).

A lipid anchor (N-myristoyl glycine; by host) is attached at G2. Disordered regions lie at residues 110–199 (RPVA…PLRA) and 419–486 (HKRE…RPPL). The short motif at 116-119 (PSAP) is the PTAP/PSAP motif element. The span at 137–151 (PTPPPYPAALPPPLA) shows a compositional bias: pro residues. The PPXY motif signature appears at 139-142 (PPPY). Positions 407–444 (LQDLVKEAEKVYHKRETEEERQEREKKEAEEKERRRDR) form a coiled coil. Residues 419–442 (HKRETEEERQEREKKEAEEKERRR) are compositionally biased toward basic and acidic residues. The segment covering 461-476 (EGSTGRQTGNLSNQAK) has biased composition (polar residues). The segment at 489–506 (DQCAYCKEKGHWARECPR) adopts a CCHC-type zinc-finger fold. Residues 543–613 (IEFLVDTGAE…CPAPLLGRDL (71 aa)) enclose the Peptidase A2 domain. D548 serves as the catalytic Protease; shared with dimeric partner. Positions 720–911 (LDLGVLVPCR…REVTYLGYLL (192 aa)) constitute a Reverse transcriptase domain. Residues D788, D862, D863, D1161, E1199, D1220, and D1290 each contribute to the Mg(2+) site. The RNase H type-1 domain occupies 1152–1298 (LPGVPTWYTD…ADEAAKQAAL (147 aa)). The segment at 1304 to 1325 (AGTTKPQEPIEPAQEKTRPREL) is disordered. Over residues 1316–1325 (AQEKTRPREL) the composition is skewed to basic and acidic residues. The segment at 1338-1376 (HQLTHLGPEKLLQLVNRTSLLIPNLQSAVREVTSQCQAC) adopts an HHCC-type zinc-finger fold. The 159-residue stretch at 1393-1551 (RGDRPGVYWE…TPYEILYGGP (159 aa)) folds into the Integrase catalytic domain. Mg(2+) is bound by residues D1404 and D1463.

This sequence belongs to the retroviral Pol polyprotein family. In terms of assembly, homohexamer; further associates as homomultimer. The virus core is composed of a lattice formed from hexagonal rings, each containing six capsid monomers. As to quaternary structure, interacts (via PPXY motif) with host NEDD4. Interacts (via PSAP motif) with host TSG101. The reverse transcriptase is a monomer (Potential). Interacts (via RNase domains) with host release factor ETF1; this interaction is essential for translational readthrough of amber codon between viral gag and pol genes, as well as for viral replication. In terms of assembly, homodimer. The cofactor is Mg(2+). In terms of processing, specific enzymatic cleavages by the viral protease yield mature proteins. The protease is released by autocatalytic cleavage. The polyprotein is cleaved during and after budding, this process is termed maturation. Phosphorylated on serine residues.

The protein resides in the virion. Its subcellular location is the host cell membrane. It is found in the host late endosome membrane. It localises to the host endosome. The protein localises to the host multivesicular body. The protein resides in the host cytoplasm. The catalysed reaction is DNA(n) + a 2'-deoxyribonucleoside 5'-triphosphate = DNA(n+1) + diphosphate. The enzyme catalyses Endonucleolytic cleavage to 5'-phosphomonoester.. Its activity is regulated as follows. Most efficiently inhibited by Amprenavir, which is able to block Gag-Pol processing in infected cells. In terms of biological role, plays a role in budding and is processed by the viral protease during virion maturation outside the cell. During budding, it recruits, in a PPXY-dependent or independent manner, Nedd4-like ubiquitin ligases that conjugate ubiquitin molecules to Gag-Pol, or to Gag-Pol binding host factors. Interaction with HECT ubiquitin ligases probably links the viral protein to the host ESCRT pathway and facilitates release. Targets Gag and gag-pol polyproteins to the plasma membrane via a multipartite membrane binding signal, that includes its myristoylated N-terminus. Also mediates nuclear localization of the pre-integration complex. Its function is as follows. Constituent of the pre-integration complex (PIC) which tethers the latter to mitotic chromosomes. This allows the integration of the viral genome into the host DNA. Functionally, forms the spherical core of the virion that encapsulates the genomic RNA-nucleocapsid complex. In terms of biological role, involved in the packaging and encapsidation of two copies of the genome. Binds with high affinity to conserved UCUG elements within the packaging signal, located near the 5'-end of the genome. This binding is dependent on genome dimerization. Acts as a nucleic acid chaperone which is involved in rearrangement of nucleic acid secondary structures during gRNA retrotranscription. The aspartyl protease mediates proteolytic cleavages of Gag and Gag-Pol polyproteins during or shortly after the release of the virion from the plasma membrane. Cleavages take place as an ordered, step-wise cascade to yield mature proteins. This process is called maturation. Displays maximal activity during the budding process just prior to particle release from the cell. Its function is as follows. RT is a multifunctional enzyme that converts the viral dimeric RNA genome into dsDNA in the cytoplasm, shortly after virus entry into the cell. This enzyme displays a DNA polymerase activity that can copy either DNA or RNA templates, and a ribonuclease H (RNase H) activity that cleaves the RNA strand of RNA-DNA heteroduplexes in a partially processive 3' to 5' endonucleasic mode. Conversion of viral genomic RNA into dsDNA requires many steps. A tRNA binds to the primer-binding site (PBS) situated at the 5' end of the viral RNA. RT uses the 3' end of the tRNA primer to perform a short round of RNA-dependent minus-strand DNA synthesis. The reading proceeds through the U5 region and ends after the repeated (R) region which is present at both ends of viral RNA. The portion of the RNA-DNA heteroduplex is digested by the RNase H, resulting in a ssDNA product attached to the tRNA primer. This ssDNA/tRNA hybridizes with the identical R region situated at the 3' end of viral RNA. This template exchange, known as minus-strand DNA strong stop transfer, can be either intra- or intermolecular. RT uses the 3' end of this newly synthesized short ssDNA to perform the RNA-dependent minus-strand DNA synthesis of the whole template. RNase H digests the RNA template except for a polypurine tract (PPT) situated at the 5' end of the genome. It is not clear if both polymerase and RNase H activities are simultaneous. RNase H probably can proceed both in a polymerase-dependent (RNA cut into small fragments by the same RT performing DNA synthesis) and a polymerase-independent mode (cleavage of remaining RNA fragments by free RTs). Secondly, RT performs DNA-directed plus-strand DNA synthesis using the PPT that has not been removed by RNase H as primers. PPT and tRNA primers are then removed by RNase H. The 3' and 5' ssDNA PBS regions hybridize to form a circular dsDNA intermediate. Strand displacement synthesis by RT to the PBS and PPT ends produces a blunt ended, linear dsDNA copy of the viral genome that includes long terminal repeats (LTRs) at both ends. Functionally, catalyzes viral DNA integration into the host chromosome, by performing a series of DNA cutting and joining reactions. This enzyme activity takes place after virion entry into a cell and reverse transcription of the RNA genome in dsDNA. The first step in the integration process is 3' processing. This step requires a complex comprising the viral genome, matrix protein and integrase. This complex is called the pre-integration complex (PIC). The integrase protein removes 2 nucleotides from each 3' end of the viral DNA, leaving recessed CA OH's at the 3' ends. In the second step that requires cell division, the PIC enters cell nucleus. In the third step, termed strand transfer, the integrase protein joins the previously processed 3' ends to the 5' ends of strands of target cellular DNA at the site of integration. The last step is viral DNA integration into host chromosome. The polypeptide is Gag-Pol polyprotein (pol) (Hylobatidae (gibbons)).